A 287-amino-acid chain; its full sequence is Octanoyl-[GcvH]:protein N-octanoyltransferase (287 aa).

Residues 45 to 253 (GESPATARSW…ELKELSGRLY (209 aa)) form the BPL/LPL catalytic domain. Cys150 serves as the catalytic Acyl-thioester intermediate.

The protein belongs to the octanoyltransferase LipL family.

It carries out the reaction N(6)-octanoyl-L-lysyl-[glycine-cleavage complex H protein] + L-lysyl-[lipoyl-carrier protein] = N(6)-octanoyl-L-lysyl-[lipoyl-carrier protein] + L-lysyl-[glycine-cleavage complex H protein]. The protein operates within protein modification; protein lipoylation via endogenous pathway; protein N(6)-(lipoyl)lysine from octanoyl-[acyl-carrier-protein]. In terms of biological role, catalyzes the amidotransfer (transamidation) of the octanoyl moiety from octanoyl-GcvH to the lipoyl domain of the E2 subunit of lipoate-dependent enzymes. The sequence is that of Octanoyl-[GcvH]:protein N-octanoyltransferase from Bacillus velezensis (strain DSM 23117 / BGSC 10A6 / LMG 26770 / FZB42) (Bacillus amyloliquefaciens subsp. plantarum).